The chain runs to 1137 residues: Phytochrome C (1137 aa).

Over residues 1 to 18 (MSSSRSNNRATCSRSSSA) the composition is skewed to low complexity. The interval 1 to 27 (MSSSRSNNRATCSRSSSARSKHSARVV) is disordered. A GAF domain is found at 217–400 (NLSLLCDVLV…VFGIQINKEV (184 aa)). Phytochromobilin is bound at residue Cys322. PAS domains are found at residues 620–690 (VTNE…LQGI) and 750–824 (IQGD…TKLS). Positions 904–1124 (YIRQELRNPL…IVLVEFPVAQ (221 aa)) constitute a Histidine kinase domain.

This sequence belongs to the phytochrome family. Homodimer. In terms of processing, contains one covalently linked phytochromobilin chromophore.

Functionally, regulatory photoreceptor which exists in two forms that are reversibly interconvertible by light: the Pr form that absorbs maximally in the red region of the spectrum and the Pfr form that absorbs maximally in the far-red region. Photoconversion of Pr to Pfr induces an array of morphogenic responses, whereas reconversion of Pfr to Pr cancels the induction of those responses. Pfr controls the expression of a number of nuclear genes including those encoding the small subunit of ribulose-bisphosphate carboxylase, chlorophyll A/B binding protein, protochlorophyllide reductase, rRNA, etc. It also controls the expression of its own gene(s) in a negative feedback fashion. The sequence is that of Phytochrome C (PHYC) from Oryza sativa subsp. indica (Rice).